Reading from the N-terminus, the 342-residue chain is Thiosulfate/3-mercaptopyruvate sulfurtransferase 2 (342 aa).

2 consecutive Rhodanese domains span residues 56–173 (GDAD…DVES) and 224–338 (EDKT…LPIV). The active-site Cysteine persulfide intermediate is cysteine 298.

In terms of tissue distribution, expressed in roots, rosette and cauline leaves, stems, flowers and siliques.

The protein resides in the cytoplasm. The catalysed reaction is thiosulfate + hydrogen cyanide = thiocyanate + sulfite + 2 H(+). The enzyme catalyses 2-oxo-3-sulfanylpropanoate + [thioredoxin]-dithiol = [thioredoxin]-disulfide + hydrogen sulfide + pyruvate + H(+). Its function is as follows. Catalyzes the transfer of a sulfur ion from a donor to cyanide or to other thiol compounds. Substrate preference is 3-mercaptopyruvate &gt; thiosulfate. Involved in embryo and seed development. The polypeptide is Thiosulfate/3-mercaptopyruvate sulfurtransferase 2 (STR2) (Arabidopsis thaliana (Mouse-ear cress)).